Reading from the N-terminus, the 124-residue chain is Protein S100-A16 (124 aa).

The region spanning 23–37 (VSKHSLVKNKISKSS) is the EF-hand 1; degenerate domain. An EF-hand 2 domain is found at 54 to 89 (GNRKAADKLIQNLDANHDGRICFDEYWTMIGGITSP). Ca(2+) is bound by residues Asp67, Asn69, Asp71, Arg73, and Glu78. Residues 97–124 (QECQQESQQECQQESQQESQQESQQGSS) form a disordered region.

Belongs to the S-100 family. In terms of assembly, homodimer. Interacts with TP53. Ubiquitous. Widely distributed throughout the adult brain and predominantly expressed within specific astrocyte populations. Expressed at high level in adipose tissues of obese animals.

The protein localises to the nucleus. Its subcellular location is the nucleolus. It localises to the cytoplasm. Its function is as follows. Calcium-binding protein. Binds one calcium ion per monomer. Can promote differentiation of adipocytes (in vitro). Overexpression in 3T3-L1 preadipocytes increases their proliferation, enhances adipogenesis and reduces insulin-stimulated glucose uptake. This chain is Protein S100-A16, found in Mus musculus (Mouse).